Consider the following 167-residue polypeptide: Protein FAM163B (167 aa).

A helical transmembrane segment spans residues 6 to 26 (VVITGGILATVILLCIIAVLC). Ser-40 is modified (phosphoserine).

It belongs to the FAM163 family.

It is found in the membrane. This chain is Protein FAM163B (Fam163b), found in Mus musculus (Mouse).